A 277-amino-acid polypeptide reads, in one-letter code: Outer plastidial membrane protein porin (277 aa).

Belongs to the eukaryotic mitochondrial porin (TC 1.B.8.1) family.

The protein localises to the plastid outer membrane. Functionally, forms a channel through the cell membrane that allows diffusion of small hydrophilic molecules. The channel adopts an open conformation at low or zero membrane potential and a closed conformation at potentials above 30-40 mV. The open state has a weak anion selectivity whereas the closed state is cation-selective. This is Outer plastidial membrane protein porin (POR1) from Zea mays (Maize).